We begin with the raw amino-acid sequence, 360 residues long: DnaJ homolog subfamily C member 25 (360 aa).

A helical transmembrane segment spans residues 20–40 (WMLLAPLLPALLLVRPAGALV). The 76-residue stretch at 49-124 (DCYEVLGVSR…ETRKDYDYML (76 aa)) folds into the J domain. A run of 2 helical transmembrane segments spans residues 150-170 (VVIL…WWNS) and 244-264 (LLLF…VWYC).

It belongs to the DNAJC25 family.

The protein localises to the membrane. The chain is DnaJ homolog subfamily C member 25 (DNAJC25) from Homo sapiens (Human).